Reading from the N-terminus, the 840-residue chain is Telomere length regulation protein TEL2 homolog (840 aa).

Methionine 1 carries the N-acetylmethionine modification. Hydroxyproline occurs at positions 374, 419, and 422. A disordered region spans residues 443 to 497; sequence PEPAGDCSSVSRGPSPAPVDTESPVEMPEKAVESDVPPTQPQGSDSELDSDDEFI. At serine 457 the chain carries Phosphoserine. Serine 486 carries the phosphoserine; by CK2 modification. Phosphoserine occurs at positions 488, 492, and 837. Positions 488–497 are enriched in acidic residues; it reads SELDSDDEFI.

This sequence belongs to the TEL2 family. Component of the TTT complex composed of TELO2, TTI1 and TTI2. Interacts with ATM, ATR, MTOR, PRKDC, RUVBL2, TTI1, TTI2, SMG1 and TRRAP. Component of the mTORC1 and mTORC2 complexes. Interacts (phosphorylated form) with PIH1D1. Interaction with PIH1D1 mediates interaction of TELO2 with the R2TP complex composed of RUVBL1, RUVBL2, PIH1D1, and RPAP3. In terms of processing, hydroxylation by PHD3 is required for a proper interaction with ATR, and activation of the ATR/CHK1/p53 pathway following DNA damage. Post-translationally, phosphorylated at Ser-486 by CK2 following growth factor deprivation, leading to its subsequent ubiquitination by the SCF(FBXO9) complex. Phosphorylation by CK2 only takes place when TELO2 is bound to mTORC1, not mTORC2; leading to selective ubiquitination of mTORC1-associated protein. Ubiquitinated by the SCF(FBXO9) complex following phosphorylation by CK2 in response to growth factor deprivation, leading to its degradation by the proteasome. Only mTORC1-associated protein is ubiquitinated and degraded, leading to selective inactivation of mTORC1 to restrain cell growth and protein translation, while mTORC2 is activated due to the relief of feedback inhibition by mTORC1.

The protein localises to the cytoplasm. The protein resides in the membrane. It localises to the nucleus. Its subcellular location is the chromosome. It is found in the telomere. Its function is as follows. Regulator of the DNA damage response (DDR). Part of the TTT complex that is required to stabilize protein levels of the phosphatidylinositol 3-kinase-related protein kinase (PIKK) family proteins. The TTT complex is involved in the cellular resistance to DNA damage stresses, like ionizing radiation (IR), ultraviolet (UV) and mitomycin C (MMC). Together with the TTT complex and HSP90 may participate in the proper folding of newly synthesized PIKKs. Promotes assembly, stabilizes and maintains the activity of mTORC1 and mTORC2 complexes, which regulate cell growth and survival in response to nutrient and hormonal signals. May be involved in telomere length regulation. The sequence is that of Telomere length regulation protein TEL2 homolog (Telo2) from Mus musculus (Mouse).